Consider the following 184-residue polypeptide: Ribosome-recycling factor (184 aa).

This sequence belongs to the RRF family.

The protein localises to the cytoplasm. Functionally, responsible for the release of ribosomes from messenger RNA at the termination of protein biosynthesis. May increase the efficiency of translation by recycling ribosomes from one round of translation to another. In Clostridium botulinum (strain ATCC 19397 / Type A), this protein is Ribosome-recycling factor.